Reading from the N-terminus, the 140-residue chain is uncharacterized protein (140 aa).

The next 2 helical transmembrane spans lie at 4–21 and 26–48; these read ILKFGILGFGAIFGYLFG and LVKVLVCFIVADYISGLLASGYL.

It belongs to the bacteriophage holin family. Cp-1 holin subfamily.

Its subcellular location is the cell membrane. This is an uncharacterized protein from Listeria monocytogenes serovar 1/2a (strain ATCC BAA-679 / EGD-e).